Reading from the N-terminus, the 763-residue chain is Phosphoglycerol transferase I (763 aa).

A run of 4 helical transmembrane segments spans residues 4–19 (LLSF…IYAW), 26–48 (WWFA…LFAS), 76–98 (YILP…GWIL), and 105–127 (PHHF…ASPA).

The protein belongs to the OpgB family.

It localises to the cell inner membrane. It catalyses the reaction a phosphatidylglycerol + a membrane-derived-oligosaccharide D-glucose = a 1,2-diacyl-sn-glycerol + a membrane-derived-oligosaccharide 6-(glycerophospho)-D-glucose.. It participates in glycan metabolism; osmoregulated periplasmic glucan (OPG) biosynthesis. Its function is as follows. Transfers a phosphoglycerol residue from phosphatidylglycerol to the membrane-bound nascent glucan backbones. The sequence is that of Phosphoglycerol transferase I from Escherichia coli O157:H7.